We begin with the raw amino-acid sequence, 140 residues long: L-fucose mutarotase (140 aa).

The active-site Proton donor is His22. Substrate contacts are provided by residues Asp30, Arg107, and 129–131 (YGN).

Belongs to the RbsD / FucU family. FucU mutarotase subfamily. Homodecamer.

The protein resides in the cytoplasm. The enzyme catalyses alpha-L-fucose = beta-L-fucose. It functions in the pathway carbohydrate metabolism; L-fucose metabolism. Functionally, involved in the anomeric conversion of L-fucose. The polypeptide is L-fucose mutarotase (Salmonella paratyphi B (strain ATCC BAA-1250 / SPB7)).